Consider the following 174-residue polypeptide: RNA pyrophosphohydrolase (174 aa).

Positions 6–150 constitute a Nudix hydrolase domain; that stretch reads GFRPNVGIVI…KREVYRRVMK (145 aa). Positions 38–59 match the Nudix box motif; sequence GGVDDGETPEQAMFRELYEEIG.

This sequence belongs to the Nudix hydrolase family. RppH subfamily. It depends on a divalent metal cation as a cofactor.

In terms of biological role, accelerates the degradation of transcripts by removing pyrophosphate from the 5'-end of triphosphorylated RNA, leading to a more labile monophosphorylated state that can stimulate subsequent ribonuclease cleavage. The protein is RNA pyrophosphohydrolase of Tolumonas auensis (strain DSM 9187 / NBRC 110442 / TA 4).